The sequence spans 419 residues: L-cysteine:1D-myo-inositol 2-amino-2-deoxy-alpha-D-glucopyranoside ligase (419 aa).

A disordered region spans residues 1–20 (MRSWSVPEVPALPGRGPRVH). Residue Cys-44 participates in Zn(2+) binding. Residues 44-47 (CGIT), Thr-59, and 82-84 (NVT) each bind L-cysteinyl-5'-AMP. Positions 46–56 (ITPYDATHLGH) match the 'HIGH' region motif. Residues 191-196 (ERGGDP) carry the 'ERGGDP' region motif. Trp-232 provides a ligand contact to L-cysteinyl-5'-AMP. Cys-236 lines the Zn(2+) pocket. 254 to 256 (GSD) is a binding site for L-cysteinyl-5'-AMP. His-261 is a Zn(2+) binding site. Val-289 is an L-cysteinyl-5'-AMP binding site. Residues 295–299 (KMSKS) carry the 'KMSKS' region motif.

It belongs to the class-I aminoacyl-tRNA synthetase family. MshC subfamily. As to quaternary structure, monomer. Zn(2+) serves as cofactor.

It carries out the reaction 1D-myo-inositol 2-amino-2-deoxy-alpha-D-glucopyranoside + L-cysteine + ATP = 1D-myo-inositol 2-(L-cysteinylamino)-2-deoxy-alpha-D-glucopyranoside + AMP + diphosphate + H(+). In terms of biological role, catalyzes the ATP-dependent condensation of GlcN-Ins and L-cysteine to form L-Cys-GlcN-Ins. In Kineococcus radiotolerans (strain ATCC BAA-149 / DSM 14245 / SRS30216), this protein is L-cysteine:1D-myo-inositol 2-amino-2-deoxy-alpha-D-glucopyranoside ligase.